A 143-amino-acid chain; its full sequence is Hemoglobin cathodic subunit alpha (143 aa).

An N-acetylserine modification is found at serine 2. One can recognise a Globin domain in the interval 2–143 (SLTAKDKTLV…VSAALADKYR (142 aa)). O2 is bound at residue histidine 59. Position 89 (histidine 89) interacts with heme b.

The protein belongs to the globin family. In terms of assembly, heterotetramer of two alpha chains and two beta chains. In terms of tissue distribution, red blood cells.

In terms of biological role, involved in oxygen transport from the gills to the various peripheral tissues. This Conger conger (Conger eel) protein is Hemoglobin cathodic subunit alpha.